A 274-amino-acid polypeptide reads, in one-letter code: MQFSKMHGLGNDFMVVDAVTQNVFFSPELIRRLADRHLGVGFDQLLVVEPPYDPELDFHYRIFNADGSEVAQCGNGARCFARFVRLKGLTNKRDIRVSTANGRMVLTVTDDDLVRVNMGEPNFEPSAVPFRANKAEKTYIMRAAEQTILCGVVSMGNPHCVIQVDDVDTAAVETLGPVLESHERFPERANIGFMQVVKREHIRLRVFERGAGETQACGSGACAAVAVGIQQGLLAEEVRVELPGGRLDIAWKGPGHPLYMTGPAVHVYDGFIHL.

3 residues coordinate substrate: asparagine 11, glutamine 44, and asparagine 64. Cysteine 73 (proton donor) is an active-site residue. Residues 74–75, asparagine 157, asparagine 190, and 208–209 contribute to the substrate site; these read GN and ER. Cysteine 217 functions as the Proton acceptor in the catalytic mechanism. 218–219 contributes to the substrate binding site; that stretch reads GS.

This sequence belongs to the diaminopimelate epimerase family. Homodimer.

Its subcellular location is the cytoplasm. The enzyme catalyses (2S,6S)-2,6-diaminopimelate = meso-2,6-diaminopimelate. It functions in the pathway amino-acid biosynthesis; L-lysine biosynthesis via DAP pathway; DL-2,6-diaminopimelate from LL-2,6-diaminopimelate: step 1/1. Functionally, catalyzes the stereoinversion of LL-2,6-diaminopimelate (L,L-DAP) to meso-diaminopimelate (meso-DAP), a precursor of L-lysine and an essential component of the bacterial peptidoglycan. The protein is Diaminopimelate epimerase of Escherichia coli O127:H6 (strain E2348/69 / EPEC).